We begin with the raw amino-acid sequence, 294 residues long: Mating type protein mtA-1 (294 aa).

A DNA-binding region (alpha box) is located at residues 46-101 (TAKKKVNGFMGFRSNYSPLFSYLPQKMRSPFMTILWQYDPYHNEWDFMCSVYSSIR).

It belongs to the MATALPHA1 family.

It is found in the nucleus. In terms of biological role, mating type proteins are sequence specific DNA-binding proteins that act as master switches in fungal differentiation by controlling gene expression in a cell type-specific fashion. Transcriptional activator that induces the transcription of alpha-specific genes. The chain is Mating type protein mtA-1 (MTA1) from Sordaria equina.